Reading from the N-terminus, the 222-residue chain is MDFLTSELLGVEETLQLTSELTNRESIWLDGRLTAGEHAALVKHNRQLDPSLPLARSIAEIVEQKIIDSPLLKSFALIRRVHSILISRSEVGDGYGWHVDNPFSKHGRRDLSFTLFLSDLSDYEGGELTFQLLQGSKEIRLPAGQIILYPSSSLHCVQPISSGVRLVCVGWIESYIQSTEDRSLLFNLDAGAKGLLARHGRSDELDLIFQAYANAVRRLSGR.

The Fe2OG dioxygenase domain occupies 80 to 174 (RVHSILISRS…RLVCVGWIES (95 aa)). 3 residues coordinate Fe cation: His-98, Asp-100, and His-155. Arg-165 provides a ligand contact to 2-oxoglutarate.

Fe(2+) is required as a cofactor. L-ascorbate serves as cofactor.

This Synechococcus sp. (strain CC9902) protein is PKHD-type hydroxylase Syncc9902_2001.